Reading from the N-terminus, the 172-residue chain is Xanthine-guanine phosphoribosyltransferase (172 aa).

5-phospho-alpha-D-ribose 1-diphosphate contacts are provided by residues 47-48 and 106-114; these read RG and DDLVDTGKT. Asp107 is a binding site for Mg(2+). Guanine is bound by residues Asp110 and Ile153. Xanthine is bound by residues Asp110 and Ile153. Residues 110 to 114 and 152 to 153 each bind GMP; these read DTGKT and WI.

It belongs to the purine/pyrimidine phosphoribosyltransferase family. XGPT subfamily. Homotetramer. The cofactor is Mg(2+).

It is found in the cell inner membrane. It carries out the reaction GMP + diphosphate = guanine + 5-phospho-alpha-D-ribose 1-diphosphate. The enzyme catalyses XMP + diphosphate = xanthine + 5-phospho-alpha-D-ribose 1-diphosphate. The catalysed reaction is IMP + diphosphate = hypoxanthine + 5-phospho-alpha-D-ribose 1-diphosphate. Its pathway is purine metabolism; GMP biosynthesis via salvage pathway; GMP from guanine: step 1/1. The protein operates within purine metabolism; XMP biosynthesis via salvage pathway; XMP from xanthine: step 1/1. Purine salvage pathway enzyme that catalyzes the transfer of the ribosyl-5-phosphate group from 5-phospho-alpha-D-ribose 1-diphosphate (PRPP) to the N9 position of the 6-oxopurines guanine and xanthine to form the corresponding ribonucleotides GMP (guanosine 5'-monophosphate) and XMP (xanthosine 5'-monophosphate), with the release of PPi. To a lesser extent, also acts on hypoxanthine. This chain is Xanthine-guanine phosphoribosyltransferase, found in Rhodopseudomonas palustris (strain BisB5).